The chain runs to 200 residues: Ankyrin repeat-containing protein YAR1 (200 aa).

ANK repeat units follow at residues 49 to 78 (SDSTALHMAAANGHIETVRYILETVSRANS) and 92 to 121 (TGNTALHWASLNGKLDVVKLLCDEYEADPF). Serine 78 carries the post-translational modification Phosphoserine. The tract at residues 152-173 (VEPEDDEEDTQTEGKNSVQITK) is disordered. The segment covering 153–162 (EPEDDEEDTQ) has biased composition (acidic residues). Over residues 164–173 (EGKNSVQITK) the composition is skewed to polar residues.

In terms of biological role, required for normal rate of cell proliferation. In Saccharomyces cerevisiae (strain ATCC 204508 / S288c) (Baker's yeast), this protein is Ankyrin repeat-containing protein YAR1 (YAR1).